The primary structure comprises 205 residues: HTH-type transcriptional repressor KstR2 (205 aa).

The HTH tetR-type domain occupies 10–70 (ASRRDELLQL…EVLRDFLDWL (61 aa)). The segment at residues 33–52 (TVRDIADSAGILSGSLYHHF) is a DNA-binding region (H-T-H motif).

In terms of assembly, homodimer.

Controls the expression of a small regulon that may play a role in the utilization of cholesterol. In Mycolicibacterium smegmatis (strain ATCC 700084 / mc(2)155) (Mycobacterium smegmatis), this protein is HTH-type transcriptional repressor KstR2 (kstR2).